The following is a 262-amino-acid chain: Acyl-[acyl-carrier-protein]--UDP-N-acetylglucosamine O-acyltransferase (262 aa).

This sequence belongs to the transferase hexapeptide repeat family. LpxA subfamily. In terms of assembly, homotrimer.

It is found in the cytoplasm. It catalyses the reaction a (3R)-hydroxyacyl-[ACP] + UDP-N-acetyl-alpha-D-glucosamine = a UDP-3-O-[(3R)-3-hydroxyacyl]-N-acetyl-alpha-D-glucosamine + holo-[ACP]. It functions in the pathway glycolipid biosynthesis; lipid IV(A) biosynthesis; lipid IV(A) from (3R)-3-hydroxytetradecanoyl-[acyl-carrier-protein] and UDP-N-acetyl-alpha-D-glucosamine: step 1/6. Its function is as follows. Involved in the biosynthesis of lipid A, a phosphorylated glycolipid that anchors the lipopolysaccharide to the outer membrane of the cell. In Burkholderia mallei (strain NCTC 10247), this protein is Acyl-[acyl-carrier-protein]--UDP-N-acetylglucosamine O-acyltransferase.